Here is a 295-residue protein sequence, read N- to C-terminus: Ethanolamine ammonia-lyase small subunit (295 aa).

Val207, Glu228, and Cys258 together coordinate adenosylcob(III)alamin.

The protein belongs to the EutC family. As to quaternary structure, the basic unit is a heterodimer which dimerizes to form tetramers. The heterotetramers trimerize; 6 large subunits form a core ring with 6 small subunits projecting outwards. Requires adenosylcob(III)alamin as cofactor.

The protein localises to the bacterial microcompartment. The enzyme catalyses ethanolamine = acetaldehyde + NH4(+). It participates in amine and polyamine degradation; ethanolamine degradation. Its function is as follows. Catalyzes the deamination of various vicinal amino-alcohols to oxo compounds. Allows this organism to utilize ethanolamine as the sole source of nitrogen and carbon in the presence of external vitamin B12. The protein is Ethanolamine ammonia-lyase small subunit of Escherichia coli O81 (strain ED1a).